A 363-amino-acid polypeptide reads, in one-letter code: Histone-lysine N-methyltransferase ASHH3 (363 aa).

An AWS domain is found at 63–114 (DDGIFCSCSSSSPGSSSTVCGSNCHCGMLFSSCSSSCKCGSECNNKPFQQRH). Residues 116 to 233 (KKMKLIQTEK…KGEHLTYDYQ (118 aa)) enclose the SET domain. The Post-SET domain maps to 239-255 (ADQDCHCGAVGCRRKLG).

It belongs to the class V-like SAM-binding methyltransferase superfamily. Histone-lysine methyltransferase family. SET2 subfamily.

It is found in the nucleus. The protein localises to the chromosome. It localises to the centromere. It carries out the reaction L-lysyl-[histone] + S-adenosyl-L-methionine = N(6)-methyl-L-lysyl-[histone] + S-adenosyl-L-homocysteine + H(+). Histone methyltransferase. This chain is Histone-lysine N-methyltransferase ASHH3 (ASHH3), found in Arabidopsis thaliana (Mouse-ear cress).